A 364-amino-acid polypeptide reads, in one-letter code: DNA replication and repair protein RecF (364 aa).

Residue 30–37 coordinates ATP; the sequence is GNNGQGKT.

It belongs to the RecF family.

The protein resides in the cytoplasm. In terms of biological role, the RecF protein is involved in DNA metabolism; it is required for DNA replication and normal SOS inducibility. RecF binds preferentially to single-stranded, linear DNA. It also seems to bind ATP. This is DNA replication and repair protein RecF from Geobacter sp. (strain M21).